A 454-amino-acid chain; its full sequence is Chromosomal replication initiator protein DnaA (454 aa).

The segment at 1-79 (MSLCLWKQCL…NSPFIKFKVY (79 aa)) is domain I, interacts with DnaA modulators. Positions 79-117 (YQTSKEKKFKKNILQKIQNLNAKPIWDKIPIFKKSSHRS) are domain II. The segment at 118–334 (NINKKHSFEN…GALNRVIVNA (217 aa)) is domain III, AAA+ region. Residues Gly-162, Gly-164, Lys-165, and Thr-166 each contribute to the ATP site. The interval 335–454 (NFTHRSITVE…FSNLIRTLSV (120 aa)) is domain IV, binds dsDNA.

Belongs to the DnaA family. As to quaternary structure, oligomerizes as a right-handed, spiral filament on DNA at oriC.

It localises to the cytoplasm. In terms of biological role, plays an essential role in the initiation and regulation of chromosomal replication. ATP-DnaA binds to the origin of replication (oriC) to initiate formation of the DNA replication initiation complex once per cell cycle. Binds the DnaA box (a 9 base pair repeat at the origin) and separates the double-stranded (ds)DNA. Forms a right-handed helical filament on oriC DNA; dsDNA binds to the exterior of the filament while single-stranded (ss)DNA is stabiized in the filament's interior. The ATP-DnaA-oriC complex binds and stabilizes one strand of the AT-rich DNA unwinding element (DUE), permitting loading of DNA polymerase. After initiation quickly degrades to an ADP-DnaA complex that is not apt for DNA replication. Binds acidic phospholipids. The protein is Chromosomal replication initiator protein DnaA of Buchnera aphidicola subsp. Schizaphis graminum (strain Sg).